The sequence spans 451 residues: Glyceraldehyde-3-phosphate dehydrogenase B, chloroplastic (451 aa).

The tract at residues 1–25 is disordered; sequence MATHAALASTRIPTNTRFPSKTSHS. A chloroplast-targeting transit peptide spans 1 to 84; sequence MATHAALAST…STAVKGVTVA (84 aa). Residues 11 to 25 show a composition bias toward polar residues; the sequence is RIPTNTRFPSKTSHS. NADP(+)-binding positions include 95–96, D119, and R164; that span reads RI. D-glyceraldehyde 3-phosphate is bound by residues 238 to 240, T269, R284, 297 to 298, and R320; these read SCT and TG. Residue C239 is the Nucleophile of the active site. Residue N403 participates in NADP(+) binding.

This sequence belongs to the glyceraldehyde-3-phosphate dehydrogenase family. As to quaternary structure, tetramer of either four A chains (GAPDH 2) or two A and two B chains (GAPDH 1).

Its subcellular location is the plastid. It localises to the chloroplast. It carries out the reaction D-glyceraldehyde 3-phosphate + phosphate + NADP(+) = (2R)-3-phospho-glyceroyl phosphate + NADPH + H(+). It participates in carbohydrate biosynthesis; Calvin cycle. The polypeptide is Glyceraldehyde-3-phosphate dehydrogenase B, chloroplastic (GAPB) (Pisum sativum (Garden pea)).